Consider the following 149-residue polypeptide: UPF0260 protein PFL_1499 (149 aa).

The protein belongs to the UPF0260 family.

This is UPF0260 protein PFL_1499 from Pseudomonas fluorescens (strain ATCC BAA-477 / NRRL B-23932 / Pf-5).